The chain runs to 302 residues: Zinc transporter ZIP1 (302 aa).

Residues 1-6 lie on the Extracellular side of the membrane; that stretch reads MEYLLQ. The chain crosses the membrane as a helical span at residues 7–27; sequence VKIAALVGLLFLTLIFGFIPA. Topologically, residues 28 to 44 are cytoplasmic; the sequence is RVKWFRDTDGTETHRTV. The chain crosses the membrane as a helical span at residues 45 to 65; the sequence is LSLISCFAGGVFLSACFLDII. Residues 66 to 80 are Extracellular-facing; that stretch reads PDYLSDINTELHARQ. Residues 81 to 101 form a helical membrane-spanning segment; it reads LETSFPLPEFIMAAGFFTVLI. Topologically, residues 102-158 are cytoplasmic; the sequence is LERIVLNCKEMRATHEERTTLIPERKSGHGHGHGDGPDPESSGHHVHVDFQAHSPFR. The interval 123–145 is disordered; it reads IPERKSGHGHGHGDGPDPESSGH. A helical membrane pass occupies residues 159-179; that stretch reads SFMLFLSLSLHSIFEGLAIGL. At 180–185 the chain is on the extracellular side; the sequence is QTTDPK. Residues 186-206 traverse the membrane as a helical segment; the sequence is VVEICIAILVHKSIIVFSLAV. Residues 207-216 are Cytoplasmic-facing; that stretch reads KLVQSAIPPL. Residues 217–237 form a helical membrane-spanning segment; sequence WVAAYIGVFALMSPVGIAIGI. The Extracellular segment spans residues 238-251; the sequence is SVMEAQLAAGPLIQ. A helical transmembrane segment spans residues 252 to 272; it reads AILEGFAAGTFVYITFLEILP. At 273–281 the chain is on the cytoplasmic side; the sequence is HELNSPGKQ. Residues 282–302 form a helical membrane-spanning segment; the sequence is LLKVLFLLLGFSIMAALSFLG.

It belongs to the ZIP transporter (TC 2.A.5) family. Highest levels in ovary, lower levels in intestine and gill, barely detected in kidney.

The protein resides in the cell membrane. It localises to the endoplasmic reticulum membrane. It catalyses the reaction Zn(2+)(in) = Zn(2+)(out). Its function is as follows. Transporter for the divalent cation Zn(2+). Mediates the influx of Zn(2+) into cells from extracellular space. This chain is Zinc transporter ZIP1 (slc39a1), found in Takifugu rubripes (Japanese pufferfish).